Here is a 432-residue protein sequence, read N- to C-terminus: N-acylneuraminate cytidylyltransferase (432 aa).

Met1 is modified (N-acetylmethionine). The interval 1–38 is disordered; sequence MDALEKGAATSGPAPRGRPSRGRPPKLQRSRGAGRGLE. The BC1 motif motif lies at 15-31; it reads PRGRPSRGRPPKLQRSR. The segment covering 18–29 has biased composition (basic residues); sequence RPSRGRPPKLQR. Omega-N-methylarginine occurs at positions 35 and 50. Residues Arg50, Asn60, Arg109, Ser118, Ser120, and Gln141 each coordinate substrate. A BC2 motif motif is present at residues 198-204; it reads KRPRRQD. Residue Arg199 is part of the active site. The short motif at 267 to 274 is the BC3 motif element; the sequence is KEKLKEIK.

This sequence belongs to the CMP-NeuNAc synthase family. As to quaternary structure, homotetramer; the active enzyme is formed by a dimer of dimers. Liver.

The protein localises to the nucleus. It carries out the reaction an N-acylneuraminate + CTP = a CMP-N-acyl-beta-neuraminate + diphosphate. It participates in amino-sugar metabolism; N-acetylneuraminate metabolism. Functionally, catalyzes the activation of N-acetylneuraminic acid (NeuNAc) to cytidine 5'-monophosphate N-acetylneuraminic acid (CMP-NeuNAc), a substrate required for the addition of sialic acid. Has some activity toward NeuNAc, N-glycolylneuraminic acid (Neu5Gc) or 2-keto-3-deoxy-D-glycero-D-galacto-nononic acid (KDN). In Rattus norvegicus (Rat), this protein is N-acylneuraminate cytidylyltransferase (Cmas).